We begin with the raw amino-acid sequence, 769 residues long: 5-methyltetrahydropteroyltriglutamate--homocysteine methyltransferase (769 aa).

5-methyltetrahydropteroyltri-L-glutamate-binding positions include 17-20 (RELK) and K118. Residues 441–443 (IGS) and E494 each bind L-homocysteine. Residues 441–443 (IGS) and E494 each bind L-methionine. Residues 525 to 526 (RC) and W571 contribute to the 5-methyltetrahydropteroyltri-L-glutamate site. Residue D609 coordinates L-homocysteine. Position 609 (D609) interacts with L-methionine. E615 contacts 5-methyltetrahydropteroyltri-L-glutamate. Zn(2+) is bound by residues H651, C653, and E675. The Proton donor role is filled by H705. A Zn(2+)-binding site is contributed by C737.

The protein belongs to the vitamin-B12 independent methionine synthase family. Requires Zn(2+) as cofactor.

The catalysed reaction is 5-methyltetrahydropteroyltri-L-glutamate + L-homocysteine = tetrahydropteroyltri-L-glutamate + L-methionine. The protein operates within amino-acid biosynthesis; L-methionine biosynthesis via de novo pathway; L-methionine from L-homocysteine (MetE route): step 1/1. In terms of biological role, catalyzes the transfer of a methyl group from 5-methyltetrahydrofolate to homocysteine resulting in methionine formation. The chain is 5-methyltetrahydropteroyltriglutamate--homocysteine methyltransferase from Blochmanniella floridana.